The sequence spans 282 residues: Major surface antigen 4 (282 aa).

A signal peptide spans 1–29 (MNYRELFTGGLSAATVCACSLLVSGAVVA).

The protein belongs to the surface antigen msp4 family.

In Anaplasma marginale, this protein is Major surface antigen 4 (msp4).